We begin with the raw amino-acid sequence, 290 residues long: 33 kDa chaperonin (290 aa).

Disulfide bonds link Cys-236/Cys-238 and Cys-269/Cys-272.

Belongs to the HSP33 family. In terms of processing, under oxidizing conditions two disulfide bonds are formed involving the reactive cysteines. Under reducing conditions zinc is bound to the reactive cysteines and the protein is inactive.

Its subcellular location is the cytoplasm. Redox regulated molecular chaperone. Protects both thermally unfolding and oxidatively damaged proteins from irreversible aggregation. Plays an important role in the bacterial defense system toward oxidative stress. The polypeptide is 33 kDa chaperonin (Brevibacillus brevis (strain 47 / JCM 6285 / NBRC 100599)).